Consider the following 830-residue polypeptide: Outer dense fiber protein 2 (830 aa).

Ser73 and Ser74 each carry phosphoserine. Thr92 is modified (phosphothreonine). A Phosphoserine; by TSSK4 modification is found at Ser95. Ser106 and Ser109 each carry phosphoserine. Phosphothreonine is present on Thr110. Ser115 and Ser129 each carry phosphoserine. A Glycyl lysine isopeptide (Lys-Gly) (interchain with G-Cter in SUMO2) cross-link involves residue Lys138. Ser139 is modified (phosphoserine). A coiled-coil region spans residues 144 to 217 (QKGERQMAKR…MSKLVEAEMD (74 aa)). Thr231 carries the post-translational modification Phosphothreonine. Coiled-coil stretches lie at residues 245-423 (DINT…AEQL) and 461-798 (EIIV…NYVQ). Ser261 and Ser632 each carry phosphoserine. The interval 537–701 (KNYEGMIDNY…EAIHQAQLRL (165 aa)) is interaction with BBOF1.

It belongs to the ODF2 family. As to quaternary structure, self-associates. Associates with microtubules and forms a fibrillar structure partially linked to the microtubule network. Interacts via its C-terminus with PLK1. Interacts with ODF1. Interacts with MARK4; the interaction is required for localization of ODF2 to centrioles. Interacts with TSSK4. Interacts with AKNA. Interacts with CFAP58. Interacts with BBOF1. Interacts with CCDC38. Interacts with CCDC42. Tyrosine phosphorylated. Phosphorylated on Ser-95 by TSSK4. Testis-specific (at protein level). Expressed in spermatids at tubular stage V of the spermatogenic cycle. Highly expressed in the cytoplasm of elongating spermatids (tubular stages X/XI). In step 14/15 spermatids of tubular stage III/IV low expression detected. No expression detected in other testicular cells as well as the early round of spermatids.

The protein resides in the cytoplasm. It localises to the cytoskeleton. The protein localises to the microtubule organizing center. Its subcellular location is the centrosome. It is found in the cell projection. The protein resides in the cilium. It localises to the centriole. The protein localises to the spindle pole. Its subcellular location is the flagellum. Functionally, seems to be a major component of sperm tail outer dense fibers (ODF). ODFs are filamentous structures located on the outside of the axoneme in the midpiece and principal piece of the mammalian sperm tail and may help to maintain the passive elastic structures and elastic recoil of the sperm tail. May have a modulating influence on sperm motility. Functions as a general scaffold protein that is specifically localized at the distal/subdistal appendages of mother centrioles. Component of the centrosome matrix required for the localization of PLK1 and NIN to the centrosomes. Required for the formation and/or maintenance of normal CETN1 assembly. In Mus musculus (Mouse), this protein is Outer dense fiber protein 2 (Odf2).